Here is a 963-residue protein sequence, read N- to C-terminus: Isoleucine--tRNA ligase (963 aa).

Residues 66–76 carry the 'HIGH' region motif; the sequence is PYANGDIHIGH. Glu596 contributes to the L-isoleucyl-5'-AMP binding site. Residues 637-641 carry the 'KMSKS' region motif; sequence KMSKS. Lys640 contributes to the ATP binding site. Zn(2+)-binding residues include Cys926, Cys929, Cys946, and Cys949.

It belongs to the class-I aminoacyl-tRNA synthetase family. IleS type 1 subfamily. As to quaternary structure, monomer. Zn(2+) is required as a cofactor.

It is found in the cytoplasm. It carries out the reaction tRNA(Ile) + L-isoleucine + ATP = L-isoleucyl-tRNA(Ile) + AMP + diphosphate. In terms of biological role, catalyzes the attachment of isoleucine to tRNA(Ile). As IleRS can inadvertently accommodate and process structurally similar amino acids such as valine, to avoid such errors it has two additional distinct tRNA(Ile)-dependent editing activities. One activity is designated as 'pretransfer' editing and involves the hydrolysis of activated Val-AMP. The other activity is designated 'posttransfer' editing and involves deacylation of mischarged Val-tRNA(Ile). This is Isoleucine--tRNA ligase from Cupriavidus pinatubonensis (strain JMP 134 / LMG 1197) (Cupriavidus necator (strain JMP 134)).